We begin with the raw amino-acid sequence, 348 residues long: tRNA N6-adenosine threonylcarbamoyltransferase (348 aa).

Fe cation contacts are provided by histidine 115 and histidine 119. Substrate-binding positions include leucine 138–glycine 142, aspartate 171, glycine 184, and asparagine 278. Aspartate 306 provides a ligand contact to Fe cation.

This sequence belongs to the KAE1 / TsaD family. It depends on Fe(2+) as a cofactor.

The protein localises to the cytoplasm. The catalysed reaction is L-threonylcarbamoyladenylate + adenosine(37) in tRNA = N(6)-L-threonylcarbamoyladenosine(37) in tRNA + AMP + H(+). Its function is as follows. Required for the formation of a threonylcarbamoyl group on adenosine at position 37 (t(6)A37) in tRNAs that read codons beginning with adenine. Is involved in the transfer of the threonylcarbamoyl moiety of threonylcarbamoyl-AMP (TC-AMP) to the N6 group of A37, together with TsaE and TsaB. TsaD likely plays a direct catalytic role in this reaction. This chain is tRNA N6-adenosine threonylcarbamoyltransferase, found in Methylibium petroleiphilum (strain ATCC BAA-1232 / LMG 22953 / PM1).